A 528-amino-acid polypeptide reads, in one-letter code: Probable serine protease HtrA1 (528 aa).

Positions 1 to 70 (MDTRVDTDNA…RPSGVQGSFV (70 aa)) are disordered. Residues 1 to 178 (MDTRVDTDNA…DVLFGGKVSY (178 aa)) lie on the Cytoplasmic side of the membrane. A compositionally biased stretch (gly residues) spans 31–40 (NNGGPNGGGR). A helical membrane pass occupies residues 179–199 (LALGILVAIALVIGGIGGVIG). Over 200–528 (RKTAEVVDAF…LTVKPDPDST (329 aa)) the chain is Periplasmic. Residues His270, Asp306, and Ser387 each act as charge relay system in the active site. Residues 426–487 (LVANSLIKDG…VIVKVGNRAV (62 aa)) form the PDZ domain.

Belongs to the peptidase S1C family. The C-terminal region exhibits both monomeric and trimeric forms in solution.

The protein localises to the cell inner membrane. The enzyme catalyses Acts on substrates that are at least partially unfolded. The cleavage site P1 residue is normally between a pair of hydrophobic residues, such as Val-|-Val.. Functionally, essential protein that may act as a regulatory protease that is conditionally activated upon appropriate environmental triggers. The polypeptide is Probable serine protease HtrA1 (Mycobacterium tuberculosis (strain ATCC 25618 / H37Rv)).